The following is a 406-amino-acid chain: Large ribosomal subunit protein uL4z (406 aa).

Positions 56–95 (PYAVSKKAGHQTSAESWGTGRAVSRIPRVPGGGTHRAGQA) are disordered.

The protein belongs to the universal ribosomal protein uL4 family.

The protein is Large ribosomal subunit protein uL4z (RPL4A) of Arabidopsis thaliana (Mouse-ear cress).